A 340-amino-acid polypeptide reads, in one-letter code: GTP 3',8-cyclase (340 aa).

One can recognise a Radical SAM core domain in the interval 8-227; it reads KLGRPIRDLR…SMIQEEFDIE (220 aa). Arg-17 is a binding site for GTP. [4Fe-4S] cluster contacts are provided by Cys-24 and Cys-28. Residue Tyr-30 participates in S-adenosyl-L-methionine binding. Cys-31 lines the [4Fe-4S] cluster pocket. Position 71 (Arg-71) interacts with GTP. Gly-75 contacts S-adenosyl-L-methionine. A GTP-binding site is contributed by Thr-102. Ser-126 serves as a coordination point for S-adenosyl-L-methionine. Lys-163 is a GTP binding site. An S-adenosyl-L-methionine-binding site is contributed by Met-197. Positions 261 and 264 each coordinate [4Fe-4S] cluster. GTP is bound at residue 266–268; it reads RAR. Residue Cys-278 coordinates [4Fe-4S] cluster.

It belongs to the radical SAM superfamily. MoaA family. In terms of assembly, monomer and homodimer. It depends on [4Fe-4S] cluster as a cofactor.

The enzyme catalyses GTP + AH2 + S-adenosyl-L-methionine = (8S)-3',8-cyclo-7,8-dihydroguanosine 5'-triphosphate + 5'-deoxyadenosine + L-methionine + A + H(+). Its pathway is cofactor biosynthesis; molybdopterin biosynthesis. Its function is as follows. Catalyzes the cyclization of GTP to (8S)-3',8-cyclo-7,8-dihydroguanosine 5'-triphosphate. The chain is GTP 3',8-cyclase from Staphylococcus carnosus (strain TM300).